The following is an 85-amino-acid chain: Hepcidin (85 aa).

The N-terminal stretch at 1 to 24 is a signal peptide; it reads MKTFSVAVAVAVVLAFICLQESSA. A propeptide spanning residues 25-64 is cleaved from the precursor; sequence VPVTEVQELEEPMSNEYQEMPVESWKMPYNNRHKRHSSPG. 4 disulfide bridges follow: Cys-66-Cys-83, Cys-69-Cys-72, Cys-70-Cys-79, and Cys-73-Cys-82.

As to expression, predominantly expressed in liver.

It localises to the secreted. Its function is as follows. Seems to act as a signaling molecule involved in the maintenance of iron homeostasis. Seems to be required in conjunction with HFE to regulate both intestinal iron absorption and iron storage in macrophages. In terms of biological role, antimicrobial activity against Gram-negative bacteria such as E.coli. The protein is Hepcidin (hamp) of Morone chrysops x Morone saxatilis (White bass x Striped bass).